The primary structure comprises 570 residues: Urease subunit alpha (570 aa).

In terms of domain architecture, Urease spans 131 to 570; the sequence is GGFDSHIHFI…LPMAQRYFMY (440 aa). Residues H136, H138, and K219 each coordinate Ni(2+). At K219 the chain carries N6-carboxylysine. H221 contacts substrate. H248 and H274 together coordinate Ni(2+). H322 (proton donor) is an active-site residue. D362 contributes to the Ni(2+) binding site.

It belongs to the metallo-dependent hydrolases superfamily. Urease alpha subunit family. Heterotrimer of UreA (gamma), UreB (beta) and UreC (alpha) subunits. Three heterotrimers associate to form the active enzyme. Ni cation serves as cofactor. Carboxylation allows a single lysine to coordinate two nickel ions.

The protein resides in the cytoplasm. It catalyses the reaction urea + 2 H2O + H(+) = hydrogencarbonate + 2 NH4(+). It functions in the pathway nitrogen metabolism; urea degradation; CO(2) and NH(3) from urea (urease route): step 1/1. In Rhodopseudomonas palustris (strain BisB18), this protein is Urease subunit alpha.